A 489-amino-acid chain; its full sequence is RNA polymerase II subunit 5-mediating protein homolog (489 aa).

Disordered stretches follow at residues 141 to 188 (NSDE…MDEE), 200 to 329 (EEKE…EEDE), 396 to 415 (ILKTNSSGNLMSTIPKSYNE), and 434 to 489 (FENQ…RQNK). Residues 157-168 (QKSTTTTTTTTT) are compositionally biased toward low complexity. Composition is skewed to basic and acidic residues over residues 169–188 (SKDKPKTEEEKKKSKEMDEE) and 215–224 (FNKKFNKKLD). 3 stretches are compositionally biased toward acidic residues: residues 227 to 265 (GSDEEYDDDNYNNNNDDDDDNDEDDDREYYQEEGFEDEK), 276 to 298 (EEDDHDDDDDYYDEGEEIVEYYD), and 315 to 329 (QGDDDNDDNDNEEDE). A compositionally biased stretch (polar residues) spans 396–413 (ILKTNSSGNLMSTIPKSY). Residues 480 to 489 (SRFKSSRQNK) show a composition bias toward basic residues.

It belongs to the RNA polymerase II subunit 5-mediating protein family.

It is found in the nucleus. This Dictyostelium discoideum (Social amoeba) protein is RNA polymerase II subunit 5-mediating protein homolog (rmp).